Consider the following 243-residue polypeptide: LAAKLSYPIADDLDIYTRLGGMIWRADSKANYGRTGERLSNHDTGVSPLAAVGVEYALTKNWATRLDYQFVSNIGDAGTVGARPDNTMLSLGVSYRFGQDDVVAPAPAPAPAPVVETKLFTLKSDVLFNSAKSSLKPEGQQALDQLYTQLSSMDPKDGSVVVLGYTDPVGKDAANQKLSEARARSVVDYLVSKGIPADKISARGMGEADQVTDSCGYKNGRATKAQIECLAPNRRVEIEVKGI.

5 beta stranded membrane-spanning segments follow: residues 1–8 (LAAKLSYP), 13–21 (LDIYTRLGG), 48–57 (PLAAVGVEYA), 62–69 (WATRLDYQ), and 88–96 (MLSLGVSYR). 5 tandem repeats follow at residues 104–105 (AP), 106–107 (AP), 108–109 (AP), 110–111 (AP), and 112–113 (AP). The 5 X 2 AA tandem repeats of A-P stretch occupies residues 104–113 (APAPAPAPAP). An OmpA-like domain is found at 115–243 (VETKLFTLKS…RRVEIEVKGI (129 aa)). An intrachain disulfide couples cysteine 215 to cysteine 229.

It belongs to the outer membrane OOP (TC 1.B.6) superfamily. OmpA family. Monomer and homodimer.

It is found in the cell outer membrane. Functionally, with TolR probably plays a role in maintaining the position of the peptidoglycan cell wall in the periplasm. Acts as a porin with low permeability that allows slow penetration of small solutes; an internal gate slows down solute passage. The polypeptide is Outer membrane protein A (Serratia odorifera).